The primary structure comprises 343 residues: N-acetyl-gamma-glutamyl-phosphate reductase (343 aa).

C149 is an active-site residue.

The protein belongs to the NAGSA dehydrogenase family. Type 1 subfamily.

It localises to the cytoplasm. It catalyses the reaction N-acetyl-L-glutamate 5-semialdehyde + phosphate + NADP(+) = N-acetyl-L-glutamyl 5-phosphate + NADPH + H(+). Its pathway is amino-acid biosynthesis; L-arginine biosynthesis; N(2)-acetyl-L-ornithine from L-glutamate: step 3/4. In terms of biological role, catalyzes the NADPH-dependent reduction of N-acetyl-5-glutamyl phosphate to yield N-acetyl-L-glutamate 5-semialdehyde. This chain is N-acetyl-gamma-glutamyl-phosphate reductase, found in Methanococcus maripaludis (strain C6 / ATCC BAA-1332).